A 485-amino-acid chain; its full sequence is NADH-quinone oxidoreductase subunit N (485 aa).

A run of 14 helical transmembrane segments spans residues 8 to 28 (LIALLPLLIVGLTVVVVMLSI), 35 to 55 (FLNATLSVIGLNAALVSLWFV), 71 to 91 (GFAMLYTGLVLLASLATCTFA), 105 to 125 (FYLLVLIAALGGILLANANHL), 127 to 147 (SLFLGIELISLPLFGLVGYAF), 159 to 179 (YTILSAAASSFLLFGMALVYA), 203 to 223 (LLAGFGLMIVGLGFKLSLVPF), 235 to 255 (PAPVSTFLATASKIAIFGVVM), 271 to 291 (VVLAIIAFASIIFGNLMALSQ), 297 to 317 (LLGYSSISHLGYLLVALIALQ), 326 to 346 (VGVYLVGYLFSSLGAFGVVSL), 373 to 393 (AAVMTVMMLSLAGIPMTLGFI), 408 to 430 (WWLVGAVVVGSAIGLYYYLRVAV), and 455 to 475 (IVVLISALLVLVLGVWPQPLI).

It belongs to the complex I subunit 2 family. In terms of assembly, NDH-1 is composed of 13 different subunits. Subunits NuoA, H, J, K, L, M, N constitute the membrane sector of the complex.

The protein localises to the cell inner membrane. The enzyme catalyses a quinone + NADH + 5 H(+)(in) = a quinol + NAD(+) + 4 H(+)(out). In terms of biological role, NDH-1 shuttles electrons from NADH, via FMN and iron-sulfur (Fe-S) centers, to quinones in the respiratory chain. The immediate electron acceptor for the enzyme in this species is believed to be ubiquinone. Couples the redox reaction to proton translocation (for every two electrons transferred, four hydrogen ions are translocated across the cytoplasmic membrane), and thus conserves the redox energy in a proton gradient. This Escherichia coli O1:K1 / APEC protein is NADH-quinone oxidoreductase subunit N.